The following is a 145-amino-acid chain: uncharacterized protein (145 aa).

The signal sequence occupies residues 1–23 (MSSSNLSSRKTRISAHFLDAAPA). A helical transmembrane segment spans residues 123–140 (VLLLIIALVFLLFVAIFI).

Its subcellular location is the membrane. This is an uncharacterized protein from Archaeoglobus fulgidus (strain ATCC 49558 / DSM 4304 / JCM 9628 / NBRC 100126 / VC-16).